A 209-amino-acid polypeptide reads, in one-letter code: Imidazoleglycerol-phosphate dehydratase (209 aa).

Belongs to the imidazoleglycerol-phosphate dehydratase family.

It is found in the cytoplasm. The enzyme catalyses D-erythro-1-(imidazol-4-yl)glycerol 3-phosphate = 3-(imidazol-4-yl)-2-oxopropyl phosphate + H2O. The protein operates within amino-acid biosynthesis; L-histidine biosynthesis; L-histidine from 5-phospho-alpha-D-ribose 1-diphosphate: step 6/9. In Microcystis aeruginosa (strain NIES-843 / IAM M-2473), this protein is Imidazoleglycerol-phosphate dehydratase.